The following is a 256-amino-acid chain: Small ribosomal subunit protein eS1 (256 aa).

The span at 1-18 shows a compositional bias: basic residues; it reads MAVGKNKRLSKGKKGVKK. Positions 1–21 are disordered; sequence MAVGKNKRLSKGKKGVKKRTV. N-acetylalanine; partial is present on alanine 2.

The protein belongs to the eukaryotic ribosomal protein eS1 family. As to quaternary structure, component of the small ribosomal subunit. Mature ribosomes consist of a small (40S) and a large (60S) subunit. The 40S subunit contains about 33 different proteins and 1 molecule of RNA (18S). The 60S subunit contains about 49 different proteins and 3 molecules of RNA (25S, 5.8S and 5S).

It is found in the cytoplasm. This Neosartorya fischeri (strain ATCC 1020 / DSM 3700 / CBS 544.65 / FGSC A1164 / JCM 1740 / NRRL 181 / WB 181) (Aspergillus fischerianus) protein is Small ribosomal subunit protein eS1 (rps1).